The following is a 91-amino-acid chain: Small ribosomal subunit protein bS18 (91 aa).

It belongs to the bacterial ribosomal protein bS18 family. Part of the 30S ribosomal subunit. Forms a tight heterodimer with protein bS6.

In terms of biological role, binds as a heterodimer with protein bS6 to the central domain of the 16S rRNA, where it helps stabilize the platform of the 30S subunit. The polypeptide is Small ribosomal subunit protein bS18 (Paraburkholderia phytofirmans (strain DSM 17436 / LMG 22146 / PsJN) (Burkholderia phytofirmans)).